The sequence spans 94 residues: uncharacterized protein (94 aa).

A disordered region spans residues 1-22; the sequence is MATLQQAQQQNNQLTQQNNQLT. Positions 1-77 form a coiled coil; sequence MATLQQAQQQ…NRLHSENHRL (77 aa).

This is an uncharacterized protein from Acheta domesticus (House cricket).